A 113-amino-acid chain; its full sequence is Large ribosomal subunit protein eL36z (113 aa).

The span at 78–88 (RKLGTHKRAKR) shows a compositional bias: basic residues. Residues 78 to 113 (RKLGTHKRAKRKREEMSSVLRKMRSLGGAAAAEKKM) are disordered.

It belongs to the eukaryotic ribosomal protein eL36 family.

The protein is Large ribosomal subunit protein eL36z (RPL36A) of Arabidopsis thaliana (Mouse-ear cress).